A 485-amino-acid chain; its full sequence is MSLFDHSVSELHKKLNNKEISVTDLVEESYKRISDVEDNVKAFLTLDEENARAKAKELDAKIGAEDNGLLFGMPIGVKDNIVTNGLRTTCASKILANFDPIYDATVVQKLKAADTVTIGKLNMDEFAMGSSNENSGFYATKNPWNLDYVPGGSSGGSAAAVAAGEVLFSLGSDTGGSIRQPAAYCGVVGLKPTYGRVSRYGLVAFASSLDQIGPITRTVEDNAYLLQAISGIDRMDATSANVEVGNYLAGLTGDVKGLRIAVPKEYLGEGVGEEARESVLAALKVLEGMGATWEEVSLPHSKYALATYYLLSSSEASANLSRFDGVRYGVRSDNVNNLLDLYKNTRSEGFGDEVKRRIMLGTFALSSGYYDAYYKKAQQVRTLIKNDFENVFANYDVIIGPTTPTPAFKVGEKVDDPMTMYANDILTIPVNLAGVPAISVPCGFGANNMPLGLQIIGKHFDETTIYRVAHAFEQATDYHTKKASL.

Active-site charge relay system residues include K78 and S153. Catalysis depends on S177, which acts as the Acyl-ester intermediate.

The protein belongs to the amidase family. GatA subfamily. In terms of assembly, heterotrimer of A, B and C subunits.

It catalyses the reaction L-glutamyl-tRNA(Gln) + L-glutamine + ATP + H2O = L-glutaminyl-tRNA(Gln) + L-glutamate + ADP + phosphate + H(+). Its function is as follows. Allows the formation of correctly charged Gln-tRNA(Gln) through the transamidation of misacylated Glu-tRNA(Gln) in organisms which lack glutaminyl-tRNA synthetase. The reaction takes place in the presence of glutamine and ATP through an activated gamma-phospho-Glu-tRNA(Gln). The sequence is that of Glutamyl-tRNA(Gln) amidotransferase subunit A from Bacillus mycoides (strain KBAB4) (Bacillus weihenstephanensis).